A 451-amino-acid chain; its full sequence is Uronate isomerase (451 aa).

This sequence belongs to the metallo-dependent hydrolases superfamily. Uronate isomerase family.

It carries out the reaction D-glucuronate = D-fructuronate. The enzyme catalyses aldehydo-D-galacturonate = keto-D-tagaturonate. It functions in the pathway carbohydrate metabolism; pentose and glucuronate interconversion. This chain is Uronate isomerase, found in Thermotoga petrophila (strain ATCC BAA-488 / DSM 13995 / JCM 10881 / RKU-1).